The sequence spans 373 residues: CCA-adding enzyme (373 aa).

Residues glycine 8 and arginine 11 each coordinate ATP. Positions 8 and 11 each coordinate CTP. Aspartate 21 and aspartate 23 together coordinate Mg(2+). ATP contacts are provided by arginine 91, arginine 137, and arginine 140. CTP-binding residues include arginine 91, arginine 137, and arginine 140.

The protein belongs to the tRNA nucleotidyltransferase/poly(A) polymerase family. Bacterial CCA-adding enzyme type 2 subfamily. Requires Mg(2+) as cofactor.

The enzyme catalyses a tRNA precursor + 2 CTP + ATP = a tRNA with a 3' CCA end + 3 diphosphate. It carries out the reaction a tRNA with a 3' CCA end + 2 CTP + ATP = a tRNA with a 3' CCACCA end + 3 diphosphate. Its function is as follows. Catalyzes the addition and repair of the essential 3'-terminal CCA sequence in tRNAs without using a nucleic acid template. Adds these three nucleotides in the order of C, C, and A to the tRNA nucleotide-73, using CTP and ATP as substrates and producing inorganic pyrophosphate. tRNA 3'-terminal CCA addition is required both for tRNA processing and repair. Also involved in tRNA surveillance by mediating tandem CCA addition to generate a CCACCA at the 3' terminus of unstable tRNAs. While stable tRNAs receive only 3'-terminal CCA, unstable tRNAs are marked with CCACCA and rapidly degraded. This chain is CCA-adding enzyme, found in Marinobacter nauticus (strain ATCC 700491 / DSM 11845 / VT8) (Marinobacter aquaeolei).